The chain runs to 193 residues: Fe/S biogenesis protein NfuA (193 aa).

Positions 150 and 153 each coordinate [4Fe-4S] cluster.

It belongs to the NfuA family. Homodimer. Requires [4Fe-4S] cluster as cofactor.

Involved in iron-sulfur cluster biogenesis. Binds a 4Fe-4S cluster, can transfer this cluster to apoproteins, and thereby intervenes in the maturation of Fe/S proteins. Could also act as a scaffold/chaperone for damaged Fe/S proteins. This Histophilus somni (strain 129Pt) (Haemophilus somnus) protein is Fe/S biogenesis protein NfuA.